Reading from the N-terminus, the 443-residue chain is Phosphoglucosamine mutase (443 aa).

Residue Ser-101 is the Phosphoserine intermediate of the active site. Mg(2+) is bound by residues Ser-101, Asp-239, Asp-241, and Asp-243. At Ser-101 the chain carries Phosphoserine.

This sequence belongs to the phosphohexose mutase family. Mg(2+) is required as a cofactor. In terms of processing, activated by phosphorylation.

It carries out the reaction alpha-D-glucosamine 1-phosphate = D-glucosamine 6-phosphate. In terms of biological role, catalyzes the conversion of glucosamine-6-phosphate to glucosamine-1-phosphate. The polypeptide is Phosphoglucosamine mutase (Francisella philomiragia subsp. philomiragia (strain ATCC 25017 / CCUG 19701 / FSC 153 / O#319-036)).